Reading from the N-terminus, the 599-residue chain is Adenine deaminase (599 aa).

Residues 1-31 form a disordered region; that stretch reads MARSNRRGGRGDPEDDPAWAPPGHRCAGERA.

Belongs to the metallo-dependent hydrolases superfamily. Adenine deaminase family. Requires Mn(2+) as cofactor.

It catalyses the reaction adenine + H2O + H(+) = hypoxanthine + NH4(+). In Methanopyrus kandleri (strain AV19 / DSM 6324 / JCM 9639 / NBRC 100938), this protein is Adenine deaminase.